A 129-amino-acid polypeptide reads, in one-letter code: Fluoride-specific ion channel FluC (129 aa).

4 consecutive transmembrane segments (helical) span residues 8–28 (FFCV…MVLA), 36–56 (AFPF…GLLL), 71–91 (FLGV…VEVV), and 103–123 (ALHI…AMML). Na(+) is bound by residues G78 and T81.

The protein belongs to the fluoride channel Fluc/FEX (TC 1.A.43) family.

The protein localises to the cell inner membrane. The catalysed reaction is fluoride(in) = fluoride(out). Na(+) is not transported, but it plays an essential structural role and its presence is essential for fluoride channel function. In terms of biological role, fluoride-specific ion channel. Important for reducing fluoride concentration in the cell, thus reducing its toxicity. The polypeptide is Fluoride-specific ion channel FluC (Idiomarina loihiensis (strain ATCC BAA-735 / DSM 15497 / L2-TR)).